Reading from the N-terminus, the 341-residue chain is Phosphate acyltransferase (341 aa).

It belongs to the PlsX family. In terms of assembly, homodimer. Probably interacts with PlsY.

The protein localises to the cytoplasm. It carries out the reaction a fatty acyl-[ACP] + phosphate = an acyl phosphate + holo-[ACP]. The protein operates within lipid metabolism; phospholipid metabolism. Functionally, catalyzes the reversible formation of acyl-phosphate (acyl-PO(4)) from acyl-[acyl-carrier-protein] (acyl-ACP). This enzyme utilizes acyl-ACP as fatty acyl donor, but not acyl-CoA. The sequence is that of Phosphate acyltransferase from Pseudoalteromonas atlantica (strain T6c / ATCC BAA-1087).